A 336-amino-acid polypeptide reads, in one-letter code: uncharacterized protein (336 aa).

The interval 162-195 is disordered; sequence ARGLPVHSSFKQNNSSQTSSNKGTTTVAAGSGSD. The segment covering 169 to 187 has biased composition (low complexity); that stretch reads SSFKQNNSSQTSSNKGTTT.

The protein belongs to the AHA1 family.

This is an uncharacterized protein from Schizosaccharomyces pombe (strain 972 / ATCC 24843) (Fission yeast).